Reading from the N-terminus, the 264-residue chain is Hemin import ATP-binding protein HmuV (264 aa).

One can recognise an ABC transporter domain in the interval 2–241 (IEVSGVSVRL…ETMLAVFGCA (240 aa)). ATP is bound at residue 34–41 (GPNGSGKT).

Belongs to the ABC transporter superfamily. Heme (hemin) importer (TC 3.A.1.14.5) family. As to quaternary structure, the complex is composed of two ATP-binding proteins (HmuV), two transmembrane proteins (HmuU) and a solute-binding protein (HmuT).

It localises to the cell inner membrane. In terms of biological role, part of the ABC transporter complex HmuTUV involved in hemin import. Responsible for energy coupling to the transport system. The polypeptide is Hemin import ATP-binding protein HmuV (Rhizobium johnstonii (strain DSM 114642 / LMG 32736 / 3841) (Rhizobium leguminosarum bv. viciae)).